The chain runs to 273 residues: Beta-lactamase OXA-133 (273 aa).

Positions 1–17 (MNKYFTCYVVASLFFSG) are cleaved as a signal peptide. Residue cysteine 18 is the site of N-palmitoyl cysteine attachment. Cysteine 18 carries the S-diacylglycerol cysteine lipid modification. The active-site Acyl-ester intermediate is the serine 79. Position 82 is an N6-carboxylysine (lysine 82). 216 to 218 (KTG) is a substrate binding site.

It belongs to the class-D beta-lactamase family.

It localises to the cell membrane. It carries out the reaction a beta-lactam + H2O = a substituted beta-amino acid. Its function is as follows. Catalyzes the hydrolysis of beta-lactam antibiotics. The chain is Beta-lactamase OXA-133 from Acinetobacter radioresistens.